The primary structure comprises 233 residues: Uridylate kinase (233 aa).

Residue 9–10 participates in ATP binding; that stretch reads GS. Position 43 (glycine 43) interacts with UMP. Positions 44 and 48 each coordinate ATP. Residues aspartate 65 and 113-119 contribute to the UMP site; that span reads VTPGQTT. 3 residues coordinate ATP: threonine 139, tyrosine 145, and aspartate 148.

This sequence belongs to the UMP kinase family. Homohexamer.

Its subcellular location is the cytoplasm. It carries out the reaction UMP + ATP = UDP + ADP. The protein operates within pyrimidine metabolism; CTP biosynthesis via de novo pathway; UDP from UMP (UMPK route): step 1/1. With respect to regulation, inhibited by UTP. In terms of biological role, catalyzes the reversible phosphorylation of UMP to UDP. This Methanosarcina mazei (strain ATCC BAA-159 / DSM 3647 / Goe1 / Go1 / JCM 11833 / OCM 88) (Methanosarcina frisia) protein is Uridylate kinase.